The following is a 142-amino-acid chain: Immunity protein WapI (142 aa).

Functionally, immunity protein component of a toxin-immunity protein module, which functions as a cellular contact-dependent growth inhibition (CDI) system. Neutralizes the tRNase activity of cognate toxin WapA upon expression in E.coli. Does not inhibit WapA from other strains of B.subtilis. The WapA C-terminus cannot be expressed on its own in E.coli, however it can be cloned in the presence of its cognate immunity protein gene. Cell contact is necessary for growth inhibition. Unlike the LXG toxin-immunity modules, WapAI mediates competition under shaking culture conditions. This Bacillus subtilis (strain 168) protein is Immunity protein WapI (wapI).